Here is a 529-residue protein sequence, read N- to C-terminus: Cytochrome P450 monooxygenase fsoB (529 aa).

The chain crosses the membrane as a helical span at residues 4-24 (WLLSLLIAGVVFAIFQLRTVG). Cys436 contacts heme.

Belongs to the cytochrome P450 family. The cofactor is heme.

It localises to the membrane. Cytochrome P450 monooxygenase; part of the gene cluster that mediates the biosynthesis of the enfumafungin-type antibiotic fuscoatroside. Four enzymes are sufficient to produce fuscoatroside: the terpene cyclase-glycosyl transferase fusion protein fsoAthe cytochrome P450 monoxygenases fsoD and fsoE, and the acetyltransferase fsoF; the cytochrome P450 monooxygenase fsoB and the glucose oxidase-like protein fsoC do not seem to play a role in biosynthesis of fuscoatroside. In Humicola fuscoatra, this protein is Cytochrome P450 monooxygenase fsoB.